A 1076-amino-acid chain; its full sequence is DNA-directed RNA polymerase subunit beta (1076 aa).

It belongs to the RNA polymerase beta chain family. In terms of assembly, in plastids the minimal PEP RNA polymerase catalytic core is composed of four subunits: alpha, beta, beta', and beta''. When a (nuclear-encoded) sigma factor is associated with the core the holoenzyme is formed, which can initiate transcription.

It localises to the plastid. The protein resides in the chloroplast. It catalyses the reaction RNA(n) + a ribonucleoside 5'-triphosphate = RNA(n+1) + diphosphate. DNA-dependent RNA polymerase catalyzes the transcription of DNA into RNA using the four ribonucleoside triphosphates as substrates. In Triticum aestivum (Wheat), this protein is DNA-directed RNA polymerase subunit beta.